A 236-amino-acid polypeptide reads, in one-letter code: Phosphoribosylaminoimidazole-succinocarboxamide synthase (236 aa).

Belongs to the SAICAR synthetase family.

The catalysed reaction is 5-amino-1-(5-phospho-D-ribosyl)imidazole-4-carboxylate + L-aspartate + ATP = (2S)-2-[5-amino-1-(5-phospho-beta-D-ribosyl)imidazole-4-carboxamido]succinate + ADP + phosphate + 2 H(+). The protein operates within purine metabolism; IMP biosynthesis via de novo pathway; 5-amino-1-(5-phospho-D-ribosyl)imidazole-4-carboxamide from 5-amino-1-(5-phospho-D-ribosyl)imidazole-4-carboxylate: step 1/2. The polypeptide is Phosphoribosylaminoimidazole-succinocarboxamide synthase (Rickettsia canadensis (strain McKiel)).